The following is a 491-amino-acid chain: 4,4'-diapolycopen-4-al dehydrogenase (491 aa).

The active site involves Glu208.

This sequence belongs to the carotenoid/retinoid oxidoreductase family. CrtN subfamily.

The catalysed reaction is all-trans-4,4'-diapolycopen-4-al + A + H2O = all-trans-4,4'-diapolycopen-4-oate + AH2 + H(+). It participates in carotenoid biosynthesis. Its function is as follows. Involved in the biosynthesis of the major C30 carotenoid methyl 4'-[6-O-(acylglycosyl)oxy]-4,4'-diapolycopen-4-oic acid via 4,4'-diapolycopen-4-oic acid intermediate. Catalyzes the oxidation of 4,4'-diapolycopen-4-al to yield 4,4'-diapolycopen-4-oic acid. This Metabacillus indicus (Bacillus indicus) protein is 4,4'-diapolycopen-4-al dehydrogenase.